We begin with the raw amino-acid sequence, 360 residues long: Pyrimidine monooxygenase RutA (360 aa).

FMN is bound by residues 49–50, N115, E124, 140–141, and S190; these read IK and RY.

This sequence belongs to the NtaA/SnaA/DszA monooxygenase family. RutA subfamily.

It carries out the reaction uracil + FMNH2 + NADH + O2 = (Z)-3-ureidoacrylate + FMN + NAD(+) + H2O + H(+). It catalyses the reaction thymine + FMNH2 + NADH + O2 = (Z)-2-methylureidoacrylate + FMN + NAD(+) + H2O + H(+). Functionally, catalyzes the pyrimidine ring opening between N-3 and C-4 by an unusual flavin hydroperoxide-catalyzed mechanism, adding oxygen atoms in the process to yield ureidoacrylate peracid, that immediately reacts with FMN forming ureidoacrylate and FMN-N(5)-oxide. The FMN-N(5)-oxide reacts spontaneously with NADH to produce FMN. Requires the flavin reductase RutF to regenerate FMN in vivo. The chain is Pyrimidine monooxygenase RutA from Pseudomonas syringae pv. syringae (strain B728a).